Consider the following 668-residue polypeptide: DNA damage-responsive serine/threonine-protein kinase RqkA (668 aa).

One can recognise a Protein kinase domain in the interval 13–272 (YELLALLGEG…SGAALAHLWA (260 aa)). Residues 19-27 (LGEGGSAQV) and Lys42 each bind ATP. The active-site Proton acceptor is Asp137.

It belongs to the protein kinase superfamily. Ser/Thr protein kinase family. It depends on pyrroloquinoline quinone as a cofactor. Autophosphorylated.

It carries out the reaction L-seryl-[protein] + ATP = O-phospho-L-seryl-[protein] + ADP + H(+). It catalyses the reaction L-threonyl-[protein] + ATP = O-phospho-L-threonyl-[protein] + ADP + H(+). With respect to regulation, autokinase activity is stimulated by DNA damage. Stimulated by PQQ and DNA ends in vitro. Functionally, plays an important role in radiation resistance and DNA double-strand break (DSB) repair. Involved in transcriptional regulation of genes important for bacterial stress response. Phosphorylates PprA in vitro. The sequence is that of DNA damage-responsive serine/threonine-protein kinase RqkA (rqkA) from Deinococcus radiodurans (strain ATCC 13939 / DSM 20539 / JCM 16871 / CCUG 27074 / LMG 4051 / NBRC 15346 / NCIMB 9279 / VKM B-1422 / R1).